A 660-amino-acid chain; its full sequence is Pro-secreted protein ORF2 (660 aa).

An N-terminal signal peptide occupies residues 1–19; sequence MRPRPILLLLLMFLPMLPA. 2 disordered regions span residues 18–43 and 66–127; these read PAPP…GFWG and VTAA…DVDS. The short motif at 28–33 is the Nuclear localization signal element; sequence RRRGRR. Residues 103–116 show a composition bias toward low complexity; the sequence is TTAGAAPLTAVAPA. Residues N137 and N310 are each glycosylated (N-linked (GlcNAc...) asparagine; by host). The particle formation stretch occupies residues 368–394; the sequence is IALTLFNLADTLLGGLPTELISSAGGQ. N562 carries an N-linked (GlcNAc...) asparagine; by host glycan. Residues 585 to 610 are oligomerization; that stretch reads TTSLGAGPVSISAVAVLAPHSALALL.

This sequence belongs to the hepevirus capsid protein family. As to quaternary structure, homodimer. In terms of assembly, self-assembles to form the capsid. The capsid is dominated by dimers that define the 30 morphological units. Interacts with phosphorylated protein ORF3. Interacts with host TMEM134. Interacts with host ASGR1 and ASGR2; these interactions facilitate infection of host hepatocytes. Post-translationally, cleaved by host protease in the N-terminus. N-glycosylated. In terms of processing, not N-glycosylated. The C-terminus of the capsid protein ORF2 is truncated in non-enveloped virions shedded in feces, probably due to host proteases.

The protein resides in the secreted. It localises to the virion. It is found in the host cytoplasm. Its subcellular location is the host endoplasmic reticulum. The protein localises to the host Golgi apparatus. The protein resides in the host cell surface. It localises to the host nucleus. In terms of biological role, plays a role in the inhibition of host antibody-mediated neutralization without blocking viral cell entry. Its function is as follows. Forms an icosahedral capsid with a T=1 symmetry and a 34 nm diameter. The capsid is composed of 60 copies linked to each other. Binds to the 5' end of the genomic RNA to mediate genome encapsidation. Binds to heparin surface proteoglycans (HSPGs) to mediate viral entry. Additionally, the interactions with host ASGR1 and ASGR2 facilitate viral infection of hepatocytes. Inhibits IFN production by blocking host TBK1-induced IRF3 phosphorylation. The nuclear form probably modulates host gene expression. This Hepatitis E virus genotype 1 (isolate Human/Burma) (HEV-1) protein is Pro-secreted protein ORF2.